The following is a 550-amino-acid chain: Dihydroxy-acid dehydratase (550 aa).

Residue Asp-78 participates in Mg(2+) binding. Cys-119 serves as a coordination point for [2Fe-2S] cluster. Mg(2+) contacts are provided by Asp-120 and Lys-121. Lys-121 is subject to N6-carboxylysine. Cys-191 contacts [2Fe-2S] cluster. Glu-440 provides a ligand contact to Mg(2+). Ser-466 functions as the Proton acceptor in the catalytic mechanism.

This sequence belongs to the IlvD/Edd family. Homodimer. Requires [2Fe-2S] cluster as cofactor. The cofactor is Mg(2+).

The enzyme catalyses (2R)-2,3-dihydroxy-3-methylbutanoate = 3-methyl-2-oxobutanoate + H2O. It carries out the reaction (2R,3R)-2,3-dihydroxy-3-methylpentanoate = (S)-3-methyl-2-oxopentanoate + H2O. Its pathway is amino-acid biosynthesis; L-isoleucine biosynthesis; L-isoleucine from 2-oxobutanoate: step 3/4. It functions in the pathway amino-acid biosynthesis; L-valine biosynthesis; L-valine from pyruvate: step 3/4. Functions in the biosynthesis of branched-chain amino acids. Catalyzes the dehydration of (2R,3R)-2,3-dihydroxy-3-methylpentanoate (2,3-dihydroxy-3-methylvalerate) into 2-oxo-3-methylpentanoate (2-oxo-3-methylvalerate) and of (2R)-2,3-dihydroxy-3-methylbutanoate (2,3-dihydroxyisovalerate) into 2-oxo-3-methylbutanoate (2-oxoisovalerate), the penultimate precursor to L-isoleucine and L-valine, respectively. This chain is Dihydroxy-acid dehydratase, found in Methanococcus maripaludis (strain C5 / ATCC BAA-1333).